A 171-amino-acid polypeptide reads, in one-letter code: Adenine phosphoribosyltransferase (171 aa).

The protein belongs to the purine/pyrimidine phosphoribosyltransferase family. In terms of assembly, homodimer.

The protein localises to the cytoplasm. The enzyme catalyses AMP + diphosphate = 5-phospho-alpha-D-ribose 1-diphosphate + adenine. Its pathway is purine metabolism; AMP biosynthesis via salvage pathway; AMP from adenine: step 1/1. Catalyzes a salvage reaction resulting in the formation of AMP, that is energically less costly than de novo synthesis. This Mycoplasma mobile (strain ATCC 43663 / 163K / NCTC 11711) (Mesomycoplasma mobile) protein is Adenine phosphoribosyltransferase.